Here is a 454-residue protein sequence, read N- to C-terminus: MDKRIFGIETEFGISYSSPDSRPLAPEEVARYLFRKVVSWGRSSNVFLTNGSRLYLDVGSHPEYATAECDDLAQLIAHDRAGELILDDLVDEAQARLAAEGFNGTVYLFKNNTDSAGNSYGSHENYLIPRRGEFSRLAEILIPFLVTRQLIAGAGKVLKTPHGATFAFSQRADHIWEGVSSATTRSRPIINTRDEPHADAEFYRRLHVIVGDSNMSETSALLKVGTVDLILRMIEAGVIMRDMRMENPIRSIREISHDLTGRALVRLANGRQLTALDIQREYLNKVTDFVATNGAHNAHVPLILDLWQRTLDAIESGDTSTIDTEVDWAIKKKLMDGYMRRHDLSLDSPRIAQLDLTYHDISRQRGIFFLLQARGQARRLVTETDVKDAVDAPPQTTRAKLRGDFVRRAQELGRDYTVDWVHLKLNDRAHQTILCKDPFRSVDERVDALLDSMG.

Residue glutamate 9 coordinates Mg(2+). Residue arginine 53 coordinates ATP. Residue tyrosine 55 coordinates Mg(2+). Aspartate 57 functions as the Proton acceptor in the catalytic mechanism. Residue glutamate 63 participates in Mg(2+) binding. ATP is bound by residues threonine 66 and tryptophan 420.

This sequence belongs to the Pup ligase/Pup deamidase family. Pup-conjugating enzyme subfamily.

It carries out the reaction ATP + [prokaryotic ubiquitin-like protein]-L-glutamate + [protein]-L-lysine = ADP + phosphate + N(6)-([prokaryotic ubiquitin-like protein]-gamma-L-glutamyl)-[protein]-L-lysine.. It functions in the pathway protein degradation; proteasomal Pup-dependent pathway. The protein operates within protein modification; protein pupylation. Catalyzes the covalent attachment of the prokaryotic ubiquitin-like protein modifier Pup to the proteasomal substrate proteins, thereby targeting them for proteasomal degradation. This tagging system is termed pupylation. The ligation reaction involves the side-chain carboxylate of the C-terminal glutamate of Pup and the side-chain amino group of a substrate lysine. The polypeptide is Pup--protein ligase (Paenarthrobacter aurescens (strain TC1)).